Consider the following 144-residue polypeptide: Large ribosomal subunit protein uL16 (144 aa).

It belongs to the universal ribosomal protein uL16 family. In terms of assembly, part of the 50S ribosomal subunit.

Binds 23S rRNA and is also seen to make contacts with the A and possibly P site tRNAs. In Bacillus licheniformis (strain ATCC 14580 / DSM 13 / JCM 2505 / CCUG 7422 / NBRC 12200 / NCIMB 9375 / NCTC 10341 / NRRL NRS-1264 / Gibson 46), this protein is Large ribosomal subunit protein uL16.